Consider the following 378-residue polypeptide: Probable pectin lyase A (378 aa).

The N-terminal stretch at 1 to 18 is a signal peptide; it reads MKYQGLLAIAGCIASASA. 2 cysteine pairs are disulfide-bonded: C81–C100 and C90–C224. The N-linked (GlcNAc...) asparagine glycan is linked to N127. The active site involves R254. A disulfide bond links C321 and C329.

The protein belongs to the polysaccharide lyase 1 family.

The protein resides in the secreted. The catalysed reaction is Eliminative cleavage of (1-&gt;4)-alpha-D-galacturonan methyl ester to give oligosaccharides with 4-deoxy-6-O-methyl-alpha-D-galact-4-enuronosyl groups at their non-reducing ends.. In terms of biological role, pectinolytic enzymes consist of four classes of enzymes: pectin lyase, polygalacturonase, pectin methylesterase and rhamnogalacturonase. Among pectinolytic enzymes, pectin lyase is the most important in depolymerization of pectin, since it cleaves internal glycosidic bonds of highly methylated pectins. This chain is Probable pectin lyase A (pelA), found in Neosartorya fischeri (strain ATCC 1020 / DSM 3700 / CBS 544.65 / FGSC A1164 / JCM 1740 / NRRL 181 / WB 181) (Aspergillus fischerianus).